The primary structure comprises 67 residues: Large ribosomal subunit protein bL32 (67 aa).

Positions 1-19 are enriched in basic residues; the sequence is MAVPKRKMSRSNTRARRSQ. Positions 1–21 are disordered; that stretch reads MAVPKRKMSRSNTRARRSQWK.

This sequence belongs to the bacterial ribosomal protein bL32 family.

This Clavibacter sepedonicus (Clavibacter michiganensis subsp. sepedonicus) protein is Large ribosomal subunit protein bL32.